Consider the following 127-residue polypeptide: Small ribosomal subunit protein uS13 (127 aa).

Positions 90–127 (KRHREGLPVNGQRTRTNARTRKGKRKTVAGRSQSTQKK) are disordered. Residues 105–117 (TNARTRKGKRKTV) are compositionally biased toward basic residues.

Belongs to the universal ribosomal protein uS13 family. In terms of assembly, part of the 30S ribosomal subunit. Forms a loose heterodimer with protein S19. Forms two bridges to the 50S subunit in the 70S ribosome.

Functionally, located at the top of the head of the 30S subunit, it contacts several helices of the 16S rRNA. In the 70S ribosome it contacts the 23S rRNA (bridge B1a) and protein L5 of the 50S subunit (bridge B1b), connecting the 2 subunits; these bridges are implicated in subunit movement. Contacts the tRNAs in the A and P-sites. This Salinibacter ruber (strain DSM 13855 / M31) protein is Small ribosomal subunit protein uS13.